A 1024-amino-acid chain; its full sequence is DNA-directed RNA polymerase subunit beta (1024 aa).

The protein belongs to the RNA polymerase beta chain family. In plastids the minimal PEP RNA polymerase catalytic core is composed of four subunits: alpha, beta, beta', and beta''. When a (nuclear-encoded) sigma factor is associated with the core the holoenzyme is formed, which can initiate transcription (Potential).

The protein resides in the plastid. It is found in the apicoplast. The enzyme catalyses RNA(n) + a ribonucleoside 5'-triphosphate = RNA(n+1) + diphosphate. In terms of biological role, DNA-dependent RNA polymerase catalyzes the transcription of DNA into RNA using the four ribonucleoside triphosphates as substrates. The polypeptide is DNA-directed RNA polymerase subunit beta (rpoB) (Plasmodium falciparum (isolate 3D7)).